We begin with the raw amino-acid sequence, 363 residues long: 3-isopropylmalate dehydrogenase (363 aa).

78-91 (GPKWEHLPPDQQPE) contributes to the NAD(+) binding site. Residues R99, R109, R138, and D227 each contribute to the substrate site. The Mg(2+) site is built by D227, D251, and D255. 285–297 (GSAPDIAGKNIAN) serves as a coordination point for NAD(+).

It belongs to the isocitrate and isopropylmalate dehydrogenases family. LeuB type 1 subfamily. In terms of assembly, homodimer. Mg(2+) is required as a cofactor. Mn(2+) serves as cofactor.

It localises to the cytoplasm. It catalyses the reaction (2R,3S)-3-isopropylmalate + NAD(+) = 4-methyl-2-oxopentanoate + CO2 + NADH. Its pathway is amino-acid biosynthesis; L-leucine biosynthesis; L-leucine from 3-methyl-2-oxobutanoate: step 3/4. Its function is as follows. Catalyzes the oxidation of 3-carboxy-2-hydroxy-4-methylpentanoate (3-isopropylmalate) to 3-carboxy-4-methyl-2-oxopentanoate. The product decarboxylates to 4-methyl-2 oxopentanoate. In Shigella flexneri, this protein is 3-isopropylmalate dehydrogenase.